Here is a 416-residue protein sequence, read N- to C-terminus: E3 ubiquitin-protein ligase DMA1 (416 aa).

The interval 1–30 (MSTNTVPSSPPNQTPPAASGIATSHDHTKF) is disordered. Residues Lys150, Lys204, Lys217, Lys237, Lys240, Lys260, Lys300, Lys306, Lys313, and Lys317 each participate in a glycyl lysine isopeptide (Lys-Gly) (interchain with G-Cter in ubiquitin) cross-link. Residues 189–252 (IIIGRYTERV…SGTFLNHQRL (64 aa)) enclose the FHA domain. An RING-type zinc finger spans residues 327–371 (CSICLNKIKPCQAIFISPCAHSWHFHCVRRLVIMNYPQFMCPNCR).

This sequence belongs to the DMA1 family. As to quaternary structure, interacts with CDC123. Interacts with PCL1. In terms of processing, UBC4-dependent autoubiquitination occurs at Lys-150, Lys-204, Lys-217, Lys-237, Lys-240, Lys-260, Lys-300, Lys-306, Lys-313 and Lys-317. UBC4-dependent autoubiquitination is responsible for DMA2 turnover. UBC13/MMS2-dependent autoubiquitination occurs at Lys-237 and Lys-306. Lys-204 and Lys-306 are also ubiquitinated in trans by DMA2 E3 ligase in association with UBC4.

It is found in the cytoplasm. It carries out the reaction S-ubiquitinyl-[E2 ubiquitin-conjugating enzyme]-L-cysteine + [acceptor protein]-L-lysine = [E2 ubiquitin-conjugating enzyme]-L-cysteine + N(6)-ubiquitinyl-[acceptor protein]-L-lysine.. E3 ubiquitin-protein ligase which functions in cell cycle retarding in conjunction with the UBC4 and UBC13/MMS2 complex, 2 E2 ubiquitin conjugating enzymes. Involved in nutritional control of the cell cycle. Targets the G1 cyclin PCL1 for destruction. Required for proper spindle positioning, likely regulating septin ring deposition at the bud neck. The chain is E3 ubiquitin-protein ligase DMA1 from Saccharomyces cerevisiae (strain ATCC 204508 / S288c) (Baker's yeast).